The primary structure comprises 210 residues: Large ribosomal subunit protein bL25 (210 aa).

Residues 185 to 210 (APEPAGQPEVPPEPAEEAKAKTIEKE) form a disordered region. The segment covering 200–210 (EEAKAKTIEKE) has biased composition (basic and acidic residues).

It belongs to the bacterial ribosomal protein bL25 family. CTC subfamily. In terms of assembly, part of the 50S ribosomal subunit; part of the 5S rRNA/L5/L18/L25 subcomplex. Contacts the 5S rRNA. Binds to the 5S rRNA independently of L5 and L18.

This is one of the proteins that binds to the 5S RNA in the ribosome where it forms part of the central protuberance. This chain is Large ribosomal subunit protein bL25, found in Desulforamulus reducens (strain ATCC BAA-1160 / DSM 100696 / MI-1) (Desulfotomaculum reducens).